The primary structure comprises 126 residues: UPF0102 protein plu4003 (126 aa).

Belongs to the UPF0102 family.

The chain is UPF0102 protein plu4003 from Photorhabdus laumondii subsp. laumondii (strain DSM 15139 / CIP 105565 / TT01) (Photorhabdus luminescens subsp. laumondii).